Reading from the N-terminus, the 832-residue chain is FAST kinase domain-containing protein 1, mitochondrial (832 aa).

The 61-residue stretch at 765–825 folds into the RAP domain; the sequence is VAIEFLDSKA…KDAWIDYLRK (61 aa).

It belongs to the FAST kinase family.

The protein resides in the mitochondrion. May regulate the stability of some mitochondrial mRNA species. This chain is FAST kinase domain-containing protein 1, mitochondrial (fastkd1), found in Xenopus tropicalis (Western clawed frog).